The chain runs to 512 residues: ATP synthase subunit alpha 1 (512 aa).

169–176 (GDRQTGKT) lines the ATP pocket.

It belongs to the ATPase alpha/beta chains family. In terms of assembly, F-type ATPases have 2 components, CF(1) - the catalytic core - and CF(0) - the membrane proton channel. CF(1) has five subunits: alpha(3), beta(3), gamma(1), delta(1), epsilon(1). CF(0) has four main subunits: a(1), b(1), b'(1) and c(9-12).

Its subcellular location is the cell inner membrane. It catalyses the reaction ATP + H2O + 4 H(+)(in) = ADP + phosphate + 5 H(+)(out). Produces ATP from ADP in the presence of a proton gradient across the membrane. The alpha chain is a regulatory subunit. The protein is ATP synthase subunit alpha 1 of Cereibacter sphaeroides (strain ATCC 17029 / ATH 2.4.9) (Rhodobacter sphaeroides).